A 259-amino-acid chain; its full sequence is Small ribosomal subunit protein eS4 (259 aa).

The 60-residue stretch at 41–100 folds into the S4 RNA-binding domain; the sequence is LPLSLFLRNRLKYALNYTEAKKILTQRVVRVDGKVRTCHKFPTGFMDVVAIERTNEYFRM.

Belongs to the eukaryotic ribosomal protein eS4 family.

The protein is Small ribosomal subunit protein eS4 (rps-4) of Caenorhabditis elegans.